A 156-amino-acid chain; its full sequence is ATP synthase subunit b (156 aa).

A helical transmembrane segment spans residues V12–A32.

It belongs to the ATPase B chain family. F-type ATPases have 2 components, F(1) - the catalytic core - and F(0) - the membrane proton channel. F(1) has five subunits: alpha(3), beta(3), gamma(1), delta(1), epsilon(1). F(0) has three main subunits: a(1), b(2) and c(10-14). The alpha and beta chains form an alternating ring which encloses part of the gamma chain. F(1) is attached to F(0) by a central stalk formed by the gamma and epsilon chains, while a peripheral stalk is formed by the delta and b chains.

The protein localises to the cell inner membrane. In terms of biological role, f(1)F(0) ATP synthase produces ATP from ADP in the presence of a proton or sodium gradient. F-type ATPases consist of two structural domains, F(1) containing the extramembraneous catalytic core and F(0) containing the membrane proton channel, linked together by a central stalk and a peripheral stalk. During catalysis, ATP synthesis in the catalytic domain of F(1) is coupled via a rotary mechanism of the central stalk subunits to proton translocation. Its function is as follows. Component of the F(0) channel, it forms part of the peripheral stalk, linking F(1) to F(0). The protein is ATP synthase subunit b of Pseudomonas putida (strain ATCC 47054 / DSM 6125 / CFBP 8728 / NCIMB 11950 / KT2440).